A 192-amino-acid chain; its full sequence is Signal peptidase complex catalytic subunit SEC11C (192 aa).

Topologically, residues 2–28 (VRAGAVGTHLPASGLDIFGDLRKMNKR) are cytoplasmic. Residues 29-48 (QLYYQVLNFAMIVSSALMIW) traverse the membrane as a helical; Signal-anchor for type II membrane protein segment. The Lumenal segment spans residues 49–192 (KGLIVLTGSE…GAYVLLKRES (144 aa)). Residues S68, H108, and D134 each act as charge relay system in the active site. Positions 177–188 (ALLAVMGAYVLL) are C-terminal short (CTS) helix.

The protein belongs to the peptidase S26B family. In terms of assembly, component of the signal peptidase complex paralog C (SPC-C) composed of a catalytic subunit SEC11C and three accessory subunits SPCS1, SPCS2 and SPCS3. Within the complex, interacts with SPCS2 and SPCS3. The complex induces a local thinning of the ER membrane which is used to measure the length of the signal peptide (SP) h-region of protein substrates. This ensures the selectivity of the complex towards h-regions shorter than 18-20 amino acids. May undergo processing at the N-terminus.

It localises to the endoplasmic reticulum membrane. It carries out the reaction Cleavage of hydrophobic, N-terminal signal or leader sequences from secreted and periplasmic proteins.. In terms of biological role, catalytic component of the signal peptidase complex (SPC) which catalyzes the cleavage of N-terminal signal sequences from nascent proteins as they are translocated into the lumen of the endoplasmic reticulum. Specifically cleaves N-terminal signal peptides that contain a hydrophobic alpha-helix (h-region) shorter than 18-20 amino acids. The polypeptide is Signal peptidase complex catalytic subunit SEC11C (SEC11C) (Canis lupus familiaris (Dog)).